We begin with the raw amino-acid sequence, 185 residues long: UPF0200 protein TON_1344 (185 aa).

ATP is bound at residue glycine 7–serine 14.

This sequence belongs to the UPF0200 family.

This is UPF0200 protein TON_1344 from Thermococcus onnurineus (strain NA1).